A 263-amino-acid polypeptide reads, in one-letter code: Histidine racemase (263 aa).

Cys-67 functions as the Proton acceptor in the catalytic mechanism. Cys-209 serves as the catalytic Proton donor.

The protein belongs to the histidine racemase family. Homodimer.

It catalyses the reaction L-histidine = D-histidine. In terms of biological role, cofactor-independent isomerase that catalyzes the reversible conversion of L-histidine to D-histidine. May play a role in growth of F.nucleatum. This chain is Histidine racemase, found in Fusobacterium nucleatum subsp. nucleatum (strain ATCC 23726 / VPI 4351).